We begin with the raw amino-acid sequence, 2346 residues long: Myomegalin (2346 aa).

Coiled-coil stretches lie at residues 41–132 (REDI…LVEA), 162–205 (DQYT…LLEE), 238–318 (DSHL…REML), and 350–684 (CSQL…RQYL). E252 carries the post-translational modification Phosphoserine. Residues 698-732 (NQQAEVTPTGRLGKQTDQGSMQIPSRDDSTSLTAK) form a disordered region. T704 carries the post-translational modification Phosphothreonine. The segment covering 722 to 732 (SRDDSTSLTAK) has biased composition (basic and acidic residues). Coiled-coil stretches lie at residues 743–936 (GDLD…TLAA), 1002–1043 (LQEE…SSVS), 1096–1124 (SSLQ…EQLV), 1212–1240 (STQH…SEAT), 1346–1385 (GKSE…LSVT), and 1431–1455 (GLQA…LPKN). Residues 1193–1214 (DNQSQPRDPGPQSAFSLPGSTQ) are disordered. Polar residues predominate over residues 1205–1214 (SAFSLPGSTQ). Residues 1551–1642 (KDHKSEKDQA…EEKKASPSHS (92 aa)) enclose the Olduvai domain. The segment covering 1591–1600 (SLTPSSSHAL) has biased composition (low complexity). Disordered regions lie at residues 1591-1614 (SLTP…SFLS) and 1633-1690 (EEKK…EANQ). The segment covering 1652–1690 (AVLSSKPSSTSASQGAKAESNSNPISLPTPQNTPKEANQ) has biased composition (polar residues). 2 coiled-coil regions span residues 1736–1760 (VVSL…ASTV) and 1840–2077 (GADL…QQLE). Disordered regions lie at residues 2081–2103 (GKAS…PGNK) and 2127–2156 (VFPS…TSPV). Residues 2085-2103 (LSPSSINQNFPASTDPGNK) show a composition bias toward polar residues. The stretch at 2273–2312 (ESTERELLELRTKVSKQERLLQSTTEHLKNANQQKESMEQ) forms a coiled coil.

Interacts with PDE4D. Isoform 13 interacts with MAPRE1 and MAPRE3. Isoform 13 forms a pericentrosomal complex with AKAP9, CDK5RAP2 and EB1/MAPRE1; within this complex, may mediate MAPRE1-binding to CDK5RAP2. Interaction of isoform 13 with AKAP9 stabilizes both proteins. Isoform 13 interacts (via N-terminus) with CAMSAP2; this interaction is much stronger in the presence of AKAP9. In complex with AKAP9, Isoform 13 recruits CAMSAP2 to the Golgi apparatus. Isoform 13 interacts with unglycosylated LGALS3BP; this interaction may connect the pericentrosomal complex to the gamma-tubulin ring complex (gamma-TuRC) to promote microtubule assembly and acetylation. As to expression, highly expressed in adult and fetal heart, in skeletal muscle and, to a lower extent, in brain and placenta.

Its subcellular location is the golgi apparatus. It localises to the cytoplasm. The protein resides in the cytoskeleton. It is found in the microtubule organizing center. The protein localises to the centrosome. Its function is as follows. Functions as an anchor sequestering components of the cAMP-dependent pathway to Golgi and/or centrosomes. In terms of biological role, participates in microtubule dynamics, promoting microtubule assembly. Depending upon the cell context, may act at the level of the Golgi apparatus or that of the centrosome. In complex with AKAP9, recruits CAMSAP2 to the Golgi apparatus and tethers non-centrosomal minus-end microtubules to the Golgi, an important step for polarized cell movement. In complex with AKAP9, EB1/MAPRE1 and CDK5RAP2, contributes to microtubules nucleation and extension from the centrosome to the cell periphery, a crucial process for directed cell migration, mitotic spindle orientation and cell-cycle progression. The chain is Myomegalin (PDE4DIP) from Homo sapiens (Human).